Here is a 938-residue protein sequence, read N- to C-terminus: Translation initiation factor IF-2 (938 aa).

The interval 55-322 is disordered; that stretch reads KAEASAAPAA…RKSKRARRQE (268 aa). 2 stretches are compositionally biased toward low complexity: residues 57–68 and 77–117; these read EASAAPAAPAEK and KKAA…AAAP. Over residues 118-136 the composition is skewed to pro residues; it reads KPGPKPAPVAEQPAPPAEP. Composition is skewed to low complexity over residues 141–153, 180–198, and 224–233; these read APEAPAASAAPAA, GMGRRPAPGAPAAPGAGDN, and MMPKSPSAFG. Residues 247 to 293 are compositionally biased toward gly residues; the sequence is PGRGGAPGRGGAPGRGGVGTGAPGRGGAPGGGFGPSGGGRPGGGRPG. The span at 310–319 shows a compositional bias: basic residues; it reads RRGRKSKRAR. Residues 431 to 603 enclose the tr-type G domain; it reads ARPPVVTVMG…VVLTADASLD (173 aa). The interval 440–447 is G1; that stretch reads GHVDHGKT. Position 440–447 (440–447) interacts with GTP; that stretch reads GHVDHGKT. Positions 465–469 are G2; that stretch reads GITQH. A G3 region spans residues 490–493; the sequence is DTPG. Residues 490-494 and 544-547 contribute to the GTP site; these read DTPGH and NKID. The G4 stretch occupies residues 544 to 547; that stretch reads NKID. The interval 580–582 is G5; sequence SAK.

This sequence belongs to the TRAFAC class translation factor GTPase superfamily. Classic translation factor GTPase family. IF-2 subfamily.

Its subcellular location is the cytoplasm. In terms of biological role, one of the essential components for the initiation of protein synthesis. Protects formylmethionyl-tRNA from spontaneous hydrolysis and promotes its binding to the 30S ribosomal subunits. Also involved in the hydrolysis of GTP during the formation of the 70S ribosomal complex. The polypeptide is Translation initiation factor IF-2 (Nocardioides sp. (strain ATCC BAA-499 / JS614)).